Consider the following 220-residue polypeptide: Pyridoxine/pyridoxamine 5'-phosphate oxidase (220 aa).

FMN contacts are provided by residues arginine 69–lysine 74, tyrosine 84–threonine 85, arginine 90, lysine 91, and glutamine 113. Position 74 (lysine 74) interacts with substrate. Positions 131, 135, and 139 each coordinate substrate. Residues glutamine 148–serine 149 and tryptophan 193 contribute to the FMN site. Arginine 199 to histidine 201 contacts substrate. Residue arginine 203 coordinates FMN.

This sequence belongs to the pyridoxamine 5'-phosphate oxidase family. Homodimer. The cofactor is FMN.

It catalyses the reaction pyridoxamine 5'-phosphate + O2 + H2O = pyridoxal 5'-phosphate + H2O2 + NH4(+). The enzyme catalyses pyridoxine 5'-phosphate + O2 = pyridoxal 5'-phosphate + H2O2. The protein operates within cofactor metabolism; pyridoxal 5'-phosphate salvage; pyridoxal 5'-phosphate from pyridoxamine 5'-phosphate: step 1/1. It functions in the pathway cofactor metabolism; pyridoxal 5'-phosphate salvage; pyridoxal 5'-phosphate from pyridoxine 5'-phosphate: step 1/1. In terms of biological role, catalyzes the oxidation of either pyridoxine 5'-phosphate (PNP) or pyridoxamine 5'-phosphate (PMP) into pyridoxal 5'-phosphate (PLP). This chain is Pyridoxine/pyridoxamine 5'-phosphate oxidase, found in Myxococcus xanthus.